The chain runs to 306 residues: Apolipoprotein E (306 aa).

The signal sequence occupies residues 1-18 (MKVLWAVLVVTLLAGCQA). Tandem repeats lie at residues 81–102 (VLME…QELG), 103–124 (PMAE…ARLG), 125–146 (ADME…TMLG), 147–168 (QSAE…KRLL), 169–190 (RDAE…EGAE), 191–212 (RGVS…LRAA), 213–230 (QTSQ…ERLR), and 231–252 (GRLE…EQME). The interval 81–252 (VLMEDTMKEV…RLDVVREQME (172 aa)) is 8 X 22 AA approximate tandem repeats. Residue M144 is modified to Methionine sulfoxide. Phosphoserine is present on S148. The LDL and other lipoprotein receptors binding stretch occupies residues 159 to 169 (HLRKLRKRLLR). Residue 163–166 (LRKR) participates in heparin binding. Residues 211-280 (AAQTSQPLRE…GWFEPVVEDM (70 aa)) form a lipid-binding and lipoprotein association region. 226 to 233 (GERLRGRL) lines the heparin pocket. The interval 268–280 (RLKGWFEPVVEDM) is specificity for association with VLDL.

Belongs to the apolipoprotein A1/A4/E family. In terms of assembly, homotetramer. May interact with ABCA1; functionally associated with ABCA1 in the biogenesis of HDLs. May interact with APP/A4 amyloid-beta peptide; the interaction is extremely stable in vitro but its physiological significance is unclear. May interact with MAPT. May interact with MAP2. In the cerebrospinal fluid, interacts with secreted SORL1. Interacts with PMEL; this allows the loading of PMEL luminal fragment on ILVs to induce fibril nucleation. In terms of processing, APOE exists as multiple glycosylated and sialylated glycoforms within cells and in plasma. The extent of glycosylation and sialylation are tissue and context specific. Glycated in plasma VLDL. Post-translationally, phosphorylated by FAM20C in the extracellular medium.

It is found in the secreted. It localises to the extracellular space. The protein localises to the extracellular matrix. The protein resides in the extracellular vesicle. Its subcellular location is the endosome. It is found in the multivesicular body. Its function is as follows. APOE is an apolipoprotein, a protein associating with lipid particles, that mainly functions in lipoprotein-mediated lipid transport between organs via the plasma and interstitial fluids. APOE is a core component of plasma lipoproteins and is involved in their production, conversion and clearance. Apolipoproteins are amphipathic molecules that interact both with lipids of the lipoprotein particle core and the aqueous environment of the plasma. As such, APOE associates with chylomicrons, chylomicron remnants, very low density lipoproteins (VLDL) and intermediate density lipoproteins (IDL) but shows a preferential binding to high-density lipoproteins (HDL). It also binds a wide range of cellular receptors including the LDL receptor/LDLR, the LDL receptor-related proteins LRP1, LRP2 and LRP8 and the very low-density lipoprotein receptor/VLDLR that mediate the cellular uptake of the APOE-containing lipoprotein particles. Finally, APOE also has a heparin-binding activity and binds heparan-sulfate proteoglycans on the surface of cells, a property that supports the capture and the receptor-mediated uptake of APOE-containing lipoproteins by cells. A main function of APOE is to mediate lipoprotein clearance through the uptake of chylomicrons, VLDLs, and HDLs by hepatocytes. APOE is also involved in the biosynthesis by the liver of VLDLs as well as their uptake by peripheral tissues ensuring the delivery of triglycerides and energy storage in muscle, heart and adipose tissues. By participating in the lipoprotein-mediated distribution of lipids among tissues, APOE plays a critical role in plasma and tissues lipid homeostasis. APOE is also involved in two steps of reverse cholesterol transport, the HDLs-mediated transport of cholesterol from peripheral tissues to the liver, and thereby plays an important role in cholesterol homeostasis. First, it is functionally associated with ABCA1 in the biogenesis of HDLs in tissues. Second, it is enriched in circulating HDLs and mediates their uptake by hepatocytes. APOE also plays an important role in lipid transport in the central nervous system, regulating neuron survival and sprouting. This chain is Apolipoprotein E (APOE), found in Hystrix brachyura (Malayan porcupine).